Reading from the N-terminus, the 446-residue chain is NADH-quinone oxidoreductase subunit D (446 aa).

The protein belongs to the complex I 49 kDa subunit family. In terms of assembly, NDH-1 is composed of 14 different subunits. Subunits NuoB, C, D, E, F, and G constitute the peripheral sector of the complex.

It localises to the cell membrane. It carries out the reaction a quinone + NADH + 5 H(+)(in) = a quinol + NAD(+) + 4 H(+)(out). Functionally, NDH-1 shuttles electrons from NADH, via FMN and iron-sulfur (Fe-S) centers, to quinones in the respiratory chain. The immediate electron acceptor for the enzyme in this species is believed to be a menaquinone. Couples the redox reaction to proton translocation (for every two electrons transferred, four hydrogen ions are translocated across the cytoplasmic membrane), and thus conserves the redox energy in a proton gradient. In Mycobacterium sp. (strain JLS), this protein is NADH-quinone oxidoreductase subunit D.